Consider the following 483-residue polypeptide: GTPase Der (483 aa).

EngA-type G domains lie at 3-167 (FTLA…GEER) and 212-387 (LRIA…EIWN). GTP contacts are provided by residues 9-16 (GRPNVGKS), 56-60 (DTAGL), 119-122 (NKAE), 218-225 (GRPNAGKS), 265-269 (DTAGM), and 330-333 (NKWD). In terms of domain architecture, KH-like spans 388 to 472 (RRISTGRLNR…PIRLSLRTSD (85 aa)).

Belongs to the TRAFAC class TrmE-Era-EngA-EngB-Septin-like GTPase superfamily. EngA (Der) GTPase family. Associates with the 50S ribosomal subunit.

GTPase that plays an essential role in the late steps of ribosome biogenesis. In Brucella melitensis biotype 2 (strain ATCC 23457), this protein is GTPase Der.